Consider the following 248-residue polypeptide: ATP synthase subunit a, chloroplastic (248 aa).

The next 5 membrane-spanning stretches (helical) occupy residues 39 to 59 (QVLITSWVVIAILLGSSILAV), 96 to 116 (VPFIGTLFLFIFVSNWSGALF), 135 to 155 (INTTVALALLTSVAYFYAGLT), 200 to 220 (LVVVVLLSLVPLVVPIPVMFL), and 221 to 241 (GLFTSGIQALIFATLAAAYIG).

This sequence belongs to the ATPase A chain family. F-type ATPases have 2 components, CF(1) - the catalytic core - and CF(0) - the membrane proton channel. CF(1) has five subunits: alpha(3), beta(3), gamma(1), delta(1), epsilon(1). CF(0) has four main subunits: a, b, b' and c.

It localises to the plastid. Its subcellular location is the chloroplast thylakoid membrane. Functionally, key component of the proton channel; it plays a direct role in the translocation of protons across the membrane. In Pelargonium hortorum (Common geranium), this protein is ATP synthase subunit a, chloroplastic.